The sequence spans 430 residues: Enolase (430 aa).

Gln164 lines the (2R)-2-phosphoglycerate pocket. Glu206 serves as the catalytic Proton donor. 3 residues coordinate Mg(2+): Asp243, Glu288, and Asp315. The (2R)-2-phosphoglycerate site is built by Lys340, Arg369, Ser370, and Lys391. Catalysis depends on Lys340, which acts as the Proton acceptor.

It belongs to the enolase family. Requires Mg(2+) as cofactor.

Its subcellular location is the cytoplasm. It is found in the secreted. The protein resides in the cell surface. It carries out the reaction (2R)-2-phosphoglycerate = phosphoenolpyruvate + H2O. It functions in the pathway carbohydrate degradation; glycolysis; pyruvate from D-glyceraldehyde 3-phosphate: step 4/5. In terms of biological role, catalyzes the reversible conversion of 2-phosphoglycerate (2-PG) into phosphoenolpyruvate (PEP). It is essential for the degradation of carbohydrates via glycolysis. The protein is Enolase of Lysinibacillus sphaericus (strain C3-41).